We begin with the raw amino-acid sequence, 460 residues long: TNF receptor-associated factor family protein DDB_G0290883 (460 aa).

The RING-type; degenerate zinc-finger motif lies at 27–67; the sequence is CPICFEFIYKKQIYQCKSGHHACKECWEKSLETKKECMTCK. 2 consecutive TRAF-type zinc fingers follow at residues 141-194 and 196-253; these read SHLI…KKEL and THYK…SELQ. One can recognise an MATH domain in the interval 320-448; that stretch reads GYRNKWIISN…DDKLTIEIYI (129 aa).

This sequence belongs to the TNF receptor-associated factor family. A subfamily.

Its subcellular location is the cytoplasm. Functionally, probable adapter protein and signal transducer that links members of the tumor necrosis factor receptor family to different signaling pathways by association with the receptor cytoplasmic domain and kinases. This Dictyostelium discoideum (Social amoeba) protein is TNF receptor-associated factor family protein DDB_G0290883.